We begin with the raw amino-acid sequence, 1274 residues long: RNA-directed RNA polymerase VP2 (1274 aa).

The 238-residue stretch at 561 to 798 (LSTTSGSVVT…KLYALMGCRI (238 aa)) folds into the RdRp catalytic domain.

The protein belongs to the reoviridae RNA-directed RNA polymerase family.

It localises to the virion. The catalysed reaction is RNA(n) + a ribonucleoside 5'-triphosphate = RNA(n+1) + diphosphate. Functionally, RNA-directed RNA polymerase that is involved in transcription and genome replication. Following infection, it catalyzes the synthesis of fully conservative plus strands. After core assembly, which consists in recruitment of one capped plus-strand for each genomic segments and polymerase complexes, the polymerase switches mode and catalyzes the synthesis of complementary minus-strands. This Aquareovirus C (isolate Golden shiner/USA/GSRV/1977) (AQRV-C) protein is RNA-directed RNA polymerase VP2 (S2).